The primary structure comprises 174 residues: Centrosomal protein 20 (174 aa).

A necessary and sufficient for homooligomerization and localization to centrosomes and pericentriolar satellites region spans residues 1 to 104 (MATVAELKAV…AFEESKDNTI (104 aa)). The LisH domain occupies 49–81 (ENLLINELIREYLEFNKYKYTASVLIAESGQPV). Residues 129–174 (GPSLQPSDPSLGRQPSRRKPMDDHLRKEEQKSTNIEDLHVSQAVNR) are disordered. Ser-144 carries the phosphoserine modification. Residues 147–167 (KPMDDHLRKEEQKSTNIEDLH) are compositionally biased toward basic and acidic residues.

This sequence belongs to the CEP43 family. In terms of assembly, homooligomer; probably required for localization to centrosomes. Forms a complex with KIAA0753/OFIP and OFD1; within this complex may stabilize the interaction between OFD1 and KIAA0753/OFIP. Interacts with PCM1; this interaction may be mediated by KIAA0753/OFIP. Interacts with PLK1 in later G1, S, G2 and M phases of the cell cycle; this interaction recruits PLK1 to centrosomes. Widely expressed. Detected in brain, heart, kidney, liver, lung, skeletal muscle, placenta and intestine.

Its subcellular location is the cytoplasm. It localises to the cytoskeleton. The protein resides in the microtubule organizing center. The protein localises to the centrosome. It is found in the centriole. Its subcellular location is the cell projection. It localises to the cilium. The protein resides in the cilium basal body. The protein localises to the cytoplasmic granule. It is found in the centriolar satellite. Functionally, involved in the biogenesis of cilia. Required for the recruitment of PLK1 to centrosomes and S phase progression. In Homo sapiens (Human), this protein is Centrosomal protein 20.